Consider the following 116-residue polypeptide: Putative membrane protein (116 aa).

The chain crosses the membrane as a helical span at residues valine 13–cysteine 33.

The protein resides in the host membrane. The sequence is that of Putative membrane protein from Alethinophid 1 reptarenavirus (isolate AlRrV1/Boa/USA/BC/2009) (Golden Gate virus).